Here is a 128-residue protein sequence, read N- to C-terminus: DNA-directed RNA polymerase subunit omega (128 aa).

The protein belongs to the RNA polymerase subunit omega family. In terms of assembly, the RNAP catalytic core consists of 2 alpha, 1 beta, 1 beta' and 1 omega subunit. When a sigma factor is associated with the core the holoenzyme is formed, which can initiate transcription.

It catalyses the reaction RNA(n) + a ribonucleoside 5'-triphosphate = RNA(n+1) + diphosphate. Functionally, promotes RNA polymerase assembly. Latches the N- and C-terminal regions of the beta' subunit thereby facilitating its interaction with the beta and alpha subunits. This Neorickettsia sennetsu (strain ATCC VR-367 / Miyayama) (Ehrlichia sennetsu) protein is DNA-directed RNA polymerase subunit omega.